Reading from the N-terminus, the 129-residue chain is Ribosome-binding factor A (129 aa).

The protein belongs to the RbfA family. In terms of assembly, monomer. Binds 30S ribosomal subunits, but not 50S ribosomal subunits or 70S ribosomes.

It is found in the cytoplasm. Functionally, one of several proteins that assist in the late maturation steps of the functional core of the 30S ribosomal subunit. Associates with free 30S ribosomal subunits (but not with 30S subunits that are part of 70S ribosomes or polysomes). Required for efficient processing of 16S rRNA. May interact with the 5'-terminal helix region of 16S rRNA. This is Ribosome-binding factor A from Thermomicrobium roseum (strain ATCC 27502 / DSM 5159 / P-2).